Consider the following 192-residue polypeptide: Probable nicotinate-nucleotide adenylyltransferase (192 aa).

The protein belongs to the NadD family.

The catalysed reaction is nicotinate beta-D-ribonucleotide + ATP + H(+) = deamido-NAD(+) + diphosphate. It participates in cofactor biosynthesis; NAD(+) biosynthesis; deamido-NAD(+) from nicotinate D-ribonucleotide: step 1/1. Catalyzes the reversible adenylation of nicotinate mononucleotide (NaMN) to nicotinic acid adenine dinucleotide (NaAD). In Staphylococcus haemolyticus (strain JCSC1435), this protein is Probable nicotinate-nucleotide adenylyltransferase.